Here is a 239-residue protein sequence, read N- to C-terminus: Geranylgeranylglyceryl phosphate synthase (239 aa).

Residues Asp-19 and Ser-48 each coordinate Mg(2+). Sn-glycerol 1-phosphate contacts are provided by residues Tyr-167–Gly-173, Gly-197–Gly-198, and Gly-219–Thr-220.

This sequence belongs to the GGGP/HepGP synthase family. Group II subfamily. Mg(2+) is required as a cofactor.

It localises to the cytoplasm. It catalyses the reaction sn-glycerol 1-phosphate + (2E,6E,10E)-geranylgeranyl diphosphate = sn-3-O-(geranylgeranyl)glycerol 1-phosphate + diphosphate. Its pathway is membrane lipid metabolism; glycerophospholipid metabolism. Its function is as follows. Prenyltransferase that catalyzes the transfer of the geranylgeranyl moiety of geranylgeranyl diphosphate (GGPP) to the C3 hydroxyl of sn-glycerol-1-phosphate (G1P). This reaction is the first ether-bond-formation step in the biosynthesis of archaeal membrane lipids. The protein is Geranylgeranylglyceryl phosphate synthase of Methanopyrus kandleri (strain AV19 / DSM 6324 / JCM 9639 / NBRC 100938).